The chain runs to 312 residues: Polyamine aminopropyltransferase (312 aa).

In terms of domain architecture, PABS spans 7–247 (FFWAQEYFTP…GPLGFALAAQ (241 aa)). Gln36 serves as a coordination point for S-methyl-5'-thioadenosine. Spermidine is bound by residues His67 and Glu95. Residues Asp115 and 147–148 (DA) each bind S-methyl-5'-thioadenosine. Asp165 serves as the catalytic Proton acceptor. S-methyl-5'-thioadenosine is bound at residue Pro174.

The protein belongs to the spermidine/spermine synthase family. In terms of assembly, homodimer or homotetramer.

It localises to the cytoplasm. The catalysed reaction is S-adenosyl 3-(methylsulfanyl)propylamine + putrescine = S-methyl-5'-thioadenosine + spermidine + H(+). The protein operates within amine and polyamine biosynthesis; spermidine biosynthesis; spermidine from putrescine: step 1/1. Its function is as follows. Catalyzes the irreversible transfer of a propylamine group from the amino donor S-adenosylmethioninamine (decarboxy-AdoMet) to putrescine (1,4-diaminobutane) to yield spermidine. This is Polyamine aminopropyltransferase from Synechococcus sp. (strain JA-3-3Ab) (Cyanobacteria bacterium Yellowstone A-Prime).